A 946-amino-acid polypeptide reads, in one-letter code: DDB1- and CUL4-associated factor 5 (946 aa).

WD repeat units follow at residues 51–91, 99–139, 140–180, 185–225, 277–317, and 331–370; these read GHFG…HSRV, EHHS…LDVF, AHED…HGEP, NYPS…SSLL, FNSC…EAGG, and GHRSIVNQVRFNPHTYMICSSGVEKIIKIWSPYKQPGCTG. The segment at 449–478 is disordered; sequence GVSERSGYTDSESSASLPRSPPPTVDESAD. The segment covering 454–465 has biased composition (polar residues); it reads SGYTDSESSASL. Position 500 is a phosphothreonine (threonine 500). Disordered stretches follow at residues 527 to 656, 675 to 860, and 894 to 946; these read LSNE…MESV, SNNK…ELET, and CETP…KLKT. Phosphoserine occurs at positions 531 and 533. A compositionally biased stretch (acidic residues) spans 531 to 544; the sequence is SDSEENVCEAELDT. Low complexity predominate over residues 555–567; that stretch reads PEDGSSSPSSSTS. Residues 579–592 show a composition bias toward basic residues; sequence ATTRQRNAMRRRQK. Over residues 625 to 638 the composition is skewed to low complexity; that stretch reads LSPSPDSSPERSAS. 3 positions are modified to phosphoserine: serine 626, serine 628, and serine 645. Residues 691 to 701 show a composition bias toward basic and acidic residues; it reads EGRAGTSHKDN. 2 stretches are compositionally biased toward polar residues: residues 760 to 769 and 808 to 819; these read GTSQDTNNSG and TLNSASGNCPRT.

As to quaternary structure, interacts with DDB1, CUL4A or CUL4B. Interacts with L3MBTL3. Interacts with SOX2. Interacts with DNMT1. Interacts with E2F1.

It functions in the pathway protein modification; protein ubiquitination. Is a substrate receptor for the CUL4-DDB1 E3 ubiquitin-protein ligase complex (CRL4), involved in the ubiquitination of a set of methylated non-histone proteins, including SOX2. The complex CRL4-DCAF5 is also involved in the ubiquitination of methylated DNMT1 and E2F1. In Mus musculus (Mouse), this protein is DDB1- and CUL4-associated factor 5 (Dcaf5).